Consider the following 443-residue polypeptide: Tubulin beta chain (443 aa).

Positions 11, 69, 138, 142, 143, 144, 204, and 226 each coordinate GTP. Residue Glu69 coordinates Mg(2+). Residues 424–443 (QYQDATAEEEGEFEEEEGEN) are disordered. Over residues 429–443 (TAEEEGEFEEEEGEN) the composition is skewed to acidic residues.

Belongs to the tubulin family. Dimer of alpha and beta chains. A typical microtubule is a hollow water-filled tube with an outer diameter of 25 nm and an inner diameter of 15 nM. Alpha-beta heterodimers associate head-to-tail to form protofilaments running lengthwise along the microtubule wall with the beta-tubulin subunit facing the microtubule plus end conferring a structural polarity. Microtubules usually have 13 protofilaments but different protofilament numbers can be found in some organisms and specialized cells. It depends on Mg(2+) as a cofactor. Some glutamate residues at the C-terminus are either polyglutamylated or polyglycylated. These 2 modifications occur exclusively on glutamate residues and result in either polyglutamate or polyglycine chains on the gamma-carboxyl group. Both modifications can coexist on the same protein on adjacent residues, and lowering polyglycylation levels increases polyglutamylation, and reciprocally. The precise function of such modifications is still unclear but they regulate the assembly and dynamics of axonemal microtubules.

The protein localises to the cytoplasm. It localises to the cytoskeleton. Tubulin is the major constituent of microtubules, a cylinder consisting of laterally associated linear protofilaments composed of alpha- and beta-tubulin heterodimers. Microtubules grow by the addition of GTP-tubulin dimers to the microtubule end, where a stabilizing cap forms. Below the cap, tubulin dimers are in GDP-bound state, owing to GTPase activity of alpha-tubulin. This is Tubulin beta chain (BTU1) from Tetrahymena thermophila.